The chain runs to 304 residues: 5-hmdU DNA kinase 2 (304 aa).

The disordered stretch occupies residues 260–304; sequence VGGQDPLAHRVPEKPQKASKTKNKAVAKEEPKTSSVSLLGLMRKA. The span at 266-275 shows a compositional bias: basic and acidic residues; that stretch reads LAHRVPEKPQ.

It belongs to the thymidylate kinase family. 5-hmdU DNA kinase subfamily.

It carries out the reaction 5-hydroxymethyl-dUMP in DNA + ATP = 5-phosphomethyl-dUMP in DNA + ADP + H(+). Functionally, phosphorylates 5-hydroxymethyluracil (5hmdU) into 5-phosphomethyl-2'-deoxyuridine (5- PmdU) on DNA as a step in the pathway leading to thymidine hypermodifications in the viral genome. The phosphate is added internally to the DNA polymer. As a final result of the pathway of hypermodification, 5-aminoethoxy-2'-deoxymethyluridine (5-NeOmdU) substitutes for about 40% of the thymidines in the viral DNA. These modifications probably prevent degradation of viral genome by the host restriction-modification antiviral defense system. The polypeptide is 5-hmdU DNA kinase 2 (Salmonella typhi).